A 150-amino-acid polypeptide reads, in one-letter code: MVKVVATNKKAYTDYEILETYEAGIVLTGTEVKSLRNGSVNFKDSFCRFKNGELYLLNLHIPPYSHGGVYNHDPERPRKLLLHKRELKRLMGKVQEEGVTIVPLKIYFNDRGIAKVEIAVARGKKKYDKREAIKKREMERKIREYMKYSR.

This sequence belongs to the SmpB family.

It is found in the cytoplasm. Its function is as follows. Required for rescue of stalled ribosomes mediated by trans-translation. Binds to transfer-messenger RNA (tmRNA), required for stable association of tmRNA with ribosomes. tmRNA and SmpB together mimic tRNA shape, replacing the anticodon stem-loop with SmpB. tmRNA is encoded by the ssrA gene; the 2 termini fold to resemble tRNA(Ala) and it encodes a 'tag peptide', a short internal open reading frame. During trans-translation Ala-aminoacylated tmRNA acts like a tRNA, entering the A-site of stalled ribosomes, displacing the stalled mRNA. The ribosome then switches to translate the ORF on the tmRNA; the nascent peptide is terminated with the 'tag peptide' encoded by the tmRNA and targeted for degradation. The ribosome is freed to recommence translation, which seems to be the essential function of trans-translation. This Thermotoga maritima (strain ATCC 43589 / DSM 3109 / JCM 10099 / NBRC 100826 / MSB8) protein is SsrA-binding protein.